A 384-amino-acid polypeptide reads, in one-letter code: Probable intron-encoded endonuclease Cox1-I1b (384 aa).

This sequence belongs to the LAGLIDADG endonuclease family.

Its subcellular location is the mitochondrion. Functionally, probable mitochondrial DNA endonuclease involved in intron homing. This Schizosaccharomyces pombe (strain 972 / ATCC 24843) (Fission yeast) protein is Probable intron-encoded endonuclease Cox1-I1b (cox1-I1b).